Reading from the N-terminus, the 978-residue chain is Regulator of MON1-CCZ1 complex homolog (978 aa).

2 stretches are compositionally biased toward low complexity: residues Thr311–Ser351 and Asn479–Asn495. Disordered stretches follow at residues Thr311 to Gln363, Ser474 to Thr546, Lys558 to Val665, and Glu703 to Ile727. The segment covering Thr496 to Met515 has biased composition (polar residues). Positions Asn516–Ser539 are enriched in low complexity. Residues Gly582–Gly591 show a composition bias toward gly residues. Composition is skewed to low complexity over residues Ser592 to Asn663 and Asn710 to Ile727. The Mic1 domain occupies Lys735–Leu908. Residues Asn955–Asn978 are disordered.

The protein belongs to the RMC1 family.

The protein resides in the lysosome membrane. It is found in the late endosome membrane. Its function is as follows. May have a role in autophagy. This is Regulator of MON1-CCZ1 complex homolog from Dictyostelium discoideum (Social amoeba).